Consider the following 334-residue polypeptide: Ornithine carbamoyltransferase (334 aa).

Residues Ser-57–Thr-60, Gln-84, Arg-108, and His-135–Gln-138 each bind carbamoyl phosphate. Residues Asn-169, Asp-233, and Ser-237–Met-238 contribute to the L-ornithine site. Residues Cys-275–Leu-276 and Arg-320 each bind carbamoyl phosphate.

This sequence belongs to the aspartate/ornithine carbamoyltransferase superfamily. OTCase family.

The protein resides in the cytoplasm. The catalysed reaction is carbamoyl phosphate + L-ornithine = L-citrulline + phosphate + H(+). Its pathway is amino-acid biosynthesis; L-arginine biosynthesis; L-arginine from L-ornithine and carbamoyl phosphate: step 1/3. Functionally, reversibly catalyzes the transfer of the carbamoyl group from carbamoyl phosphate (CP) to the N(epsilon) atom of ornithine (ORN) to produce L-citrulline. This is Ornithine carbamoyltransferase from Aeromonas hydrophila subsp. hydrophila (strain ATCC 7966 / DSM 30187 / BCRC 13018 / CCUG 14551 / JCM 1027 / KCTC 2358 / NCIMB 9240 / NCTC 8049).